Here is a 253-residue protein sequence, read N- to C-terminus: 2-C-methyl-D-erythritol 4-phosphate cytidylyltransferase (253 aa).

Residues 1-28 form a disordered region; that stretch reads MSVSSRPGRRRFALIPSAGTGTRAGGDL.

It belongs to the IspD/TarI cytidylyltransferase family. IspD subfamily.

The catalysed reaction is 2-C-methyl-D-erythritol 4-phosphate + CTP + H(+) = 4-CDP-2-C-methyl-D-erythritol + diphosphate. It participates in isoprenoid biosynthesis; isopentenyl diphosphate biosynthesis via DXP pathway; isopentenyl diphosphate from 1-deoxy-D-xylulose 5-phosphate: step 2/6. In terms of biological role, catalyzes the formation of 4-diphosphocytidyl-2-C-methyl-D-erythritol from CTP and 2-C-methyl-D-erythritol 4-phosphate (MEP). This is 2-C-methyl-D-erythritol 4-phosphate cytidylyltransferase from Ralstonia nicotianae (strain ATCC BAA-1114 / GMI1000) (Ralstonia solanacearum).